The following is a 201-amino-acid chain: Small ribosomal subunit protein eS1 (201 aa).

It belongs to the eukaryotic ribosomal protein eS1 family.

The protein is Small ribosomal subunit protein eS1 of Methanoregula boonei (strain DSM 21154 / JCM 14090 / 6A8).